The chain runs to 336 residues: MTCTIVVGGQWGDEGKGKIISYICEKDKPSVVARGGVGPNAGHSVEVDGKKYGIRMVPTGFPNRSSKLAVGAGVLVDVDVLLKEVEMLKEFNIKDRVIIDYNCGVIEEKHKEMDKSNSHLSKEIGSTGTGCGPANVDRAMRTLRLAKEFDALKPFLGDVSDLVNEALENGENVLIEGTQGTLLSLYYGSYPYVTSNDTSASAFASDVGIGPTKVDEVIVVFKSYPTRVGEGPFPTEMDVEEAEKLGLVEYGTVTGRRRRIGYFDYDLAKKVCRLNGATAIALTCLDKYDEECHGLTNYDDITEKGLAFIKEIEEKVGVPVKIISTGPELHQTIDIR.

GTP-binding positions include 12 to 18 (GDEGKGK) and 42 to 44 (GHS). Asp-13 serves as the catalytic Proton acceptor. Mg(2+) is bound by residues Asp-13 and Gly-42. Residues 13-16 (DEGK), 40-43 (NAGH), Thr-127, Arg-141, Gln-179, Thr-194, and Arg-256 each bind IMP. Residue His-43 is the Proton donor of the active site. 252–258 (TVTGRRR) contributes to the substrate binding site. GTP is bound by residues Arg-258, 284 to 286 (CLD), and 324 to 326 (STG).

Belongs to the adenylosuccinate synthetase family. Homodimer. Mg(2+) serves as cofactor.

The protein localises to the cytoplasm. The enzyme catalyses IMP + L-aspartate + GTP = N(6)-(1,2-dicarboxyethyl)-AMP + GDP + phosphate + 2 H(+). It functions in the pathway purine metabolism; AMP biosynthesis via de novo pathway; AMP from IMP: step 1/2. Functionally, plays an important role in the de novo pathway of purine nucleotide biosynthesis. Catalyzes the first committed step in the biosynthesis of AMP from IMP. The protein is Adenylosuccinate synthetase of Methanococcus aeolicus (strain ATCC BAA-1280 / DSM 17508 / OCM 812 / Nankai-3).